A 721-amino-acid polypeptide reads, in one-letter code: Dolichyl-diphosphooligosaccharide--protein glycosyltransferase subunit STT3B (721 aa).

The Cytoplasmic segment spans residues 1-25 (MAAATALDSLPAPLRSLRLKTKQQE). Residues 26 to 46 (LLLRVSALALIYVLAFVVRLF) form a helical membrane-spanning segment. Residues 47–129 (SVLRYESMIH…VHIREVCVLT (83 aa)) are Lumenal-facing. The DXD motif 1 signature appears at 57 to 59 (EFD). D59 lines the Mn(2+) pocket. Residues 130–148 (APFFAANTTLVAYAFGREI) form a helical membrane-spanning segment. Residues 149 to 150 (WD) lie on the Cytoplasmic side of the membrane. The chain crosses the membrane as a helical span at residues 151–168 (SGAGLVAAALIAVCPGYI). Residues 169–179 (SRSVAGSYDNE) lie on the Lumenal side of the membrane. Residues D177 and E179 each coordinate Mn(2+). Positions 177–179 (DNE) match the DXD motif 2 motif. The chain crosses the membrane as a helical span at residues 180–199 (GVAIFALLLTFYLFVRAVNT). The Cytoplasmic segment spans residues 200 to 201 (GS). Residues 202-216 (LAWSLASAFGYFYMV) form a helical membrane-spanning segment. Topologically, residues 217 to 221 (SAWGG) are lumenal. Residues 222 to 238 (YVFIINLLPLYVLVLLV) form a helical membrane-spanning segment. Over 239–243 (TGRYS) the chain is Cytoplasmic. The helical transmembrane segment at 244–269 (QRLYVAYNSTYVLGMLLAMQIRFVGF) threads the bilayer. The Lumenal segment spans residues 270-277 (QHVQSGEH). Residues 278–297 (MAAMGVFFLLQVFFFLDWVK) traverse the membrane as a helical segment. Topologically, residues 298 to 313 (YLLNDAKLFKSFLRIT) are cytoplasmic. The chain crosses the membrane as a helical span at residues 314–334 (LTCVITVGTLALGIGTASGYI). At 335-367 (SPWTGRFYSLLDPTYAKDHIPIIASVSEHQPTA) the chain is on the lumenal side. The short motif at 359–362 (SVSE) is the SVSE motif element. Residues 368-390 (WSSFMFDFHILLFLFPAGLYFCF) form a helical membrane-spanning segment. Residues 391–396 (KRLSDA) lie on the Cytoplasmic side of the membrane. The helical transmembrane segment at 397-413 (TIFIVMYGLTSMYFAGV) threads the bilayer. Residues 414–417 (MVRL) lie on the Lumenal side of the membrane. Residue R416 participates in dolichyl diphosphooligosaccharide binding. A helical transmembrane segment spans residues 418–439 (ILVAAPAVCLISAIAASATIKN). At 440–471 (LTTLIRTKSKSPQTVSGKSSGSKAAAKGAVDQ) the chain is on the cytoplasmic side. Residues 472-492 (SLPFQQNVAIALLLGAFYLLS) form a helical membrane-spanning segment. Topologically, residues 493-721 (RYAVHCTWVT…YKVKPPKNRS (229 aa)) are lumenal. Residues 548–550 (WWD) are interacts with target acceptor peptide in protein substrate. Residues 548 to 552 (WWDYG) carry the WWDYG motif motif. Y553 is a dolichyl diphosphooligosaccharide binding site. N-linked (GlcNAc...) asparagine glycosylation is found at N560 and N567. A glycan (N-linked (GlcNAc...) (high mannose) asparagine) is linked at N571. The short motif at 615-622 (DINKFLWM) is the DK motif element.

This sequence belongs to the STT3 family. As to quaternary structure, component of the oligosaccharyltransferase (OST) complex. Mg(2+) is required as a cofactor. Requires Mn(2+) as cofactor.

The protein localises to the endoplasmic reticulum membrane. It catalyses the reaction a di-trans,poly-cis-dolichyl diphosphooligosaccharide + L-asparaginyl-[protein] = N(4)-(oligosaccharide-(1-&gt;4)-N-acetyl-beta-D-glucosaminyl-(1-&gt;4)-N-acetyl-beta-D-glucosaminyl)-L-asparaginyl-[protein] + a di-trans,poly-cis-dolichyl diphosphate + H(+). Its pathway is protein modification; protein glycosylation. In terms of biological role, catalytic subunit of the oligosaccharyl transferase (OST) complex that catalyzes the initial transfer of a defined glycan (Glc(3)Man(9)GlcNAc(2) in eukaryotes) from the lipid carrier dolichol-pyrophosphate to an asparagine residue within an Asn-X-Ser/Thr consensus motif in nascent polypeptide chains, the first step in protein N-glycosylation. N-glycosylation occurs cotranslationally and the complex associates with the Sec61 complex at the channel-forming translocon complex that mediates protein translocation across the endoplasmic reticulum (ER). All subunits are required for a maximal enzyme activity. This subunit contains the active site and the acceptor peptide and donor lipid-linked oligosaccharide (LLO) binding pockets. The chain is Dolichyl-diphosphooligosaccharide--protein glycosyltransferase subunit STT3B (STT3B) from Oryza sativa subsp. japonica (Rice).